Reading from the N-terminus, the 462-residue chain is Squalene synthase ERG9 (462 aa).

Residues 406–426 (AVVLFGVVIAALVCISGLMLG) form a helical membrane-spanning segment.

This sequence belongs to the phytoene/squalene synthase family. The cofactor is Mg(2+).

Its subcellular location is the endoplasmic reticulum membrane. It localises to the microsome. It carries out the reaction 2 (2E,6E)-farnesyl diphosphate + NADPH + H(+) = squalene + 2 diphosphate + NADP(+). It catalyses the reaction 2 (2E,6E)-farnesyl diphosphate + NADH + H(+) = squalene + 2 diphosphate + NAD(+). It functions in the pathway terpene metabolism; lanosterol biosynthesis; lanosterol from farnesyl diphosphate: step 1/3. Its pathway is steroid metabolism; ergosterol biosynthesis. Its function is as follows. Squalene synthase; part of the third module of ergosterol biosynthesis pathway that includes the late steps of the pathway. ERG9 produces squalene from 2 farnesyl pyrophosphate moieties. The third module or late pathway involves the ergosterol synthesis itself through consecutive reactions that mainly occur in the endoplasmic reticulum (ER) membrane. Firstly, the squalene synthase ERG9 catalyzes the condensation of 2 farnesyl pyrophosphate moieties to form squalene, which is the precursor of all steroids. Squalene synthase is crucial for balancing the incorporation of farnesyl diphosphate (FPP) into sterol and nonsterol isoprene synthesis. Secondly, squalene is converted into lanosterol by the consecutive action of the squalene epoxidase ERG1 and the lanosterol synthase ERG7. Then, the delta(24)-sterol C-methyltransferase ERG6 methylates lanosterol at C-24 to produce eburicol. Eburicol is the substrate of the sterol 14-alpha demethylase encoded by CYP51A, CYP51B and CYP51C, to yield 4,4,24-trimethyl ergosta-8,14,24(28)-trienol. CYP51B encodes the enzyme primarily responsible for sterol 14-alpha-demethylation, and plays an essential role in ascospore formation. CYP51A encodes an additional sterol 14-alpha-demethylase, induced on ergosterol depletion and responsible for the intrinsic variation in azole sensitivity. The third CYP51 isoform, CYP51C, does not encode a sterol 14-alpha-demethylase, but is required for full virulence on host wheat ears. The C-14 reductase ERG24 then reduces the C14=C15 double bond which leads to 4,4-dimethylfecosterol. A sequence of further demethylations at C-4, involving the C-4 demethylation complex containing the C-4 methylsterol oxidases ERG25, the sterol-4-alpha-carboxylate 3-dehydrogenase ERG26 and the 3-keto-steroid reductase ERG27, leads to the production of fecosterol via 4-methylfecosterol. ERG28 has a role as a scaffold to help anchor ERG25, ERG26 and ERG27 to the endoplasmic reticulum. The C-8 sterol isomerase ERG2 then catalyzes the reaction which results in unsaturation at C-7 in the B ring of sterols and thus converts fecosterol to episterol. The sterol-C5-desaturases ERG3A and ERG3BB then catalyze the introduction of a C-5 double bond in the B ring to produce 5-dehydroepisterol. The C-22 sterol desaturases ERG5A and ERG5B further convert 5-dehydroepisterol into ergosta-5,7,22,24(28)-tetraen-3beta-ol by forming the C-22(23) double bond in the sterol side chain. Finally, ergosta-5,7,22,24(28)-tetraen-3beta-ol is substrate of the C-24(28) sterol reductase ERG4 to produce ergosterol. This chain is Squalene synthase ERG9, found in Gibberella zeae (strain ATCC MYA-4620 / CBS 123657 / FGSC 9075 / NRRL 31084 / PH-1) (Wheat head blight fungus).